The chain runs to 178 residues: uncharacterized protein (178 aa).

The protein belongs to the mimivirus L114/R131 family.

This is an uncharacterized protein from Acanthamoeba polyphaga mimivirus (APMV).